A 285-amino-acid polypeptide reads, in one-letter code: MKIKDALIKAYSVLKETNDEFYMEDSQILLSYVLKKDRIFLITNREYEIEENSLKQYFDYINMRKKKMPIRYITEKCEFMGLDFHVEKGVLIPRPDTEILVEAVLEYIELNNYKKVCDVCTGSGAIGLSIAKYAKDVEVLCSDISPDAIRVSKINRQGLNLEDRVKIENGDLLEKPIERGEKFDIVVSNPPYIREDEIPKLMDDVKDYEPIIALVGGEDGLDFYRRITSMSKKVLKPGGLIAYEIGSDEANEVSNILENEGFVSIETRKDFARMDRVVLAVRGGL.

S-adenosyl-L-methionine-binding residues include Asp-143 and Asn-189. Position 189 to 192 (189 to 192) interacts with substrate; that stretch reads NPPY.

The protein belongs to the protein N5-glutamine methyltransferase family. PrmC subfamily.

It carries out the reaction L-glutaminyl-[peptide chain release factor] + S-adenosyl-L-methionine = N(5)-methyl-L-glutaminyl-[peptide chain release factor] + S-adenosyl-L-homocysteine + H(+). In terms of biological role, methylates the class 1 translation termination release factors RF1/PrfA and RF2/PrfB on the glutamine residue of the universally conserved GGQ motif. The chain is Release factor glutamine methyltransferase from Clostridium acetobutylicum (strain ATCC 824 / DSM 792 / JCM 1419 / IAM 19013 / LMG 5710 / NBRC 13948 / NRRL B-527 / VKM B-1787 / 2291 / W).